A 308-amino-acid chain; its full sequence is Sulfate adenylyltransferase subunit 2 (308 aa).

The disordered stretch occupies residues Arg286–Phe308.

Belongs to the PAPS reductase family. CysD subfamily. As to quaternary structure, heterodimer composed of CysD, the smaller subunit, and CysN.

It catalyses the reaction sulfate + ATP + H(+) = adenosine 5'-phosphosulfate + diphosphate. It participates in sulfur metabolism; hydrogen sulfide biosynthesis; sulfite from sulfate: step 1/3. In terms of biological role, with CysN forms the ATP sulfurylase (ATPS) that catalyzes the adenylation of sulfate producing adenosine 5'-phosphosulfate (APS) and diphosphate, the first enzymatic step in sulfur assimilation pathway. APS synthesis involves the formation of a high-energy phosphoric-sulfuric acid anhydride bond driven by GTP hydrolysis by CysN coupled to ATP hydrolysis by CysD. The protein is Sulfate adenylyltransferase subunit 2 of Nocardia farcinica (strain IFM 10152).